Reading from the N-terminus, the 673-residue chain is Protein transport Sec1a (673 aa).

The segment at 538–591 (SSHKEESEARTGSVRKSSAPTAVPERKATPHSMRSRRTATWARPHSSDDGYSSD) is disordered.

The protein belongs to the STXBP/unc-18/SEC1 family. Does not bind the syntaxin KNOLLE.

Its function is as follows. Involved in the vesicle trafficking. Binds syntaxins. The chain is Protein transport Sec1a (SEC1A) from Arabidopsis thaliana (Mouse-ear cress).